The following is a 337-amino-acid chain: MIEADRLIQPQVLAQDEHIDRAMRPKLLDDYTGQDDTRAQLKIFIQAAINRKEALDHMLIFGPPGLGKTTLAMIVANEMGVNIKSTSGPVLEKAGDLAALLTNLDEGDVLFIDEIHRLSPVVEEILYPAMEDYQLDIMIGEGPAARSIKLDLPPFTLIGATTRAGALTSPLRARFGIPLRLEFYNVKDLCTIVTRSAKVMELAIDAGGAHEIAKRSRGTPRIANRLLRRVRDYAEVKFAGEVTEDVAQQALDMLDVDQEGFDYLDRKLLLSIIDKFMGGPVGLDNLAAAIGEDRETIEDVLEPFLIQQGFIQRTPRGRIVTPRAYQHFNIITPDVPK.

Residues 4-184 (ADRLIQPQVL…FGIPLRLEFY (181 aa)) form a large ATPase domain (RuvB-L) region. ATP contacts are provided by residues arginine 24, glycine 65, lysine 68, threonine 69, threonine 70, 131-133 (EDY), arginine 174, tyrosine 184, and arginine 221. Threonine 69 contributes to the Mg(2+) binding site. Residues 185 to 255 (NVKDLCTIVT…VAQQALDMLD (71 aa)) are small ATPAse domain (RuvB-S). Positions 258 to 337 (QEGFDYLDRK…FNIITPDVPK (80 aa)) are head domain (RuvB-H). The DNA site is built by arginine 294, arginine 313, and arginine 318.

The protein belongs to the RuvB family. In terms of assembly, homohexamer. Forms an RuvA(8)-RuvB(12)-Holliday junction (HJ) complex. HJ DNA is sandwiched between 2 RuvA tetramers; dsDNA enters through RuvA and exits via RuvB. An RuvB hexamer assembles on each DNA strand where it exits the tetramer. Each RuvB hexamer is contacted by two RuvA subunits (via domain III) on 2 adjacent RuvB subunits; this complex drives branch migration. In the full resolvosome a probable DNA-RuvA(4)-RuvB(12)-RuvC(2) complex forms which resolves the HJ.

The protein resides in the cytoplasm. The enzyme catalyses ATP + H2O = ADP + phosphate + H(+). The RuvA-RuvB-RuvC complex processes Holliday junction (HJ) DNA during genetic recombination and DNA repair, while the RuvA-RuvB complex plays an important role in the rescue of blocked DNA replication forks via replication fork reversal (RFR). RuvA specifically binds to HJ cruciform DNA, conferring on it an open structure. The RuvB hexamer acts as an ATP-dependent pump, pulling dsDNA into and through the RuvAB complex. RuvB forms 2 homohexamers on either side of HJ DNA bound by 1 or 2 RuvA tetramers; 4 subunits per hexamer contact DNA at a time. Coordinated motions by a converter formed by DNA-disengaged RuvB subunits stimulates ATP hydrolysis and nucleotide exchange. Immobilization of the converter enables RuvB to convert the ATP-contained energy into a lever motion, pulling 2 nucleotides of DNA out of the RuvA tetramer per ATP hydrolyzed, thus driving DNA branch migration. The RuvB motors rotate together with the DNA substrate, which together with the progressing nucleotide cycle form the mechanistic basis for DNA recombination by continuous HJ branch migration. Branch migration allows RuvC to scan DNA until it finds its consensus sequence, where it cleaves and resolves cruciform DNA. In Shewanella denitrificans (strain OS217 / ATCC BAA-1090 / DSM 15013), this protein is Holliday junction branch migration complex subunit RuvB.